A 463-amino-acid polypeptide reads, in one-letter code: Exodeoxyribonuclease 7 large subunit (463 aa).

It belongs to the XseA family. In terms of assembly, heterooligomer composed of large and small subunits.

It is found in the cytoplasm. The catalysed reaction is Exonucleolytic cleavage in either 5'- to 3'- or 3'- to 5'-direction to yield nucleoside 5'-phosphates.. Bidirectionally degrades single-stranded DNA into large acid-insoluble oligonucleotides, which are then degraded further into small acid-soluble oligonucleotides. The polypeptide is Exodeoxyribonuclease 7 large subunit (Bordetella bronchiseptica (strain ATCC BAA-588 / NCTC 13252 / RB50) (Alcaligenes bronchisepticus)).